The chain runs to 444 residues: 3-isopropylmalate dehydratase large subunit (444 aa).

[4Fe-4S] cluster-binding residues include X348, C408, and X411. Residues 423–444 form a disordered region; that stretch reads ERXXSHSNRNFEGRQGRGGRTH.

The protein belongs to the aconitase/IPM isomerase family. LeuC type 1 subfamily. As to quaternary structure, heterodimer of LeuC and LeuD. It depends on [4Fe-4S] cluster as a cofactor.

It carries out the reaction (2R,3S)-3-isopropylmalate = (2S)-2-isopropylmalate. It participates in amino-acid biosynthesis; L-leucine biosynthesis; L-leucine from 3-methyl-2-oxobutanoate: step 2/4. Functionally, catalyzes the isomerization between 2-isopropylmalate and 3-isopropylmalate, via the formation of 2-isopropylmaleate. The protein is 3-isopropylmalate dehydratase large subunit of Buchnera aphidicola subsp. Uroleucon rudbeckiae.